A 226-amino-acid polypeptide reads, in one-letter code: Thymidylate kinase (226 aa).

Residue 16–23 (GIDGAGKT) coordinates ATP.

The protein belongs to the thymidylate kinase family.

It carries out the reaction dTMP + ATP = dTDP + ADP. Its function is as follows. Phosphorylation of dTMP to form dTDP in both de novo and salvage pathways of dTTP synthesis. This chain is Thymidylate kinase, found in Xanthomonas euvesicatoria pv. vesicatoria (strain 85-10) (Xanthomonas campestris pv. vesicatoria).